A 90-amino-acid polypeptide reads, in one-letter code: Secretoglobin family 1D member 2 (90 aa).

The signal sequence occupies residues 1 to 21 (MKLSVCLLLVTLALCCYQANA).

This sequence belongs to the secretoglobin family. Lipophilin subfamily. In terms of tissue distribution, highest expression was found in skeletal muscle. Expressed as well in thymus, trachea, kidney, steroid responsive tissues (prostate, testis, uterus, breast and ovary) and salivary gland.

The protein resides in the secreted. May bind androgens and other steroids, may also bind estramustine, a chemotherapeutic agent used for prostate cancer. May be under transcriptional regulation of steroid hormones. This chain is Secretoglobin family 1D member 2 (SCGB1D2), found in Homo sapiens (Human).